The following is a 391-amino-acid chain: Alkanesulfonate monooxygenase (391 aa).

It belongs to the SsuD family.

It carries out the reaction an alkanesulfonate + FMNH2 + O2 = an aldehyde + FMN + sulfite + H2O + 2 H(+). Catalyzes the desulfonation of aliphatic sulfonates. This Rhodopseudomonas palustris (strain TIE-1) protein is Alkanesulfonate monooxygenase.